A 164-amino-acid polypeptide reads, in one-letter code: uncharacterized protein (164 aa).

Positions methionine 1–proline 17 are enriched in polar residues. The interval methionine 1–aspartate 48 is disordered. A compositionally biased stretch (low complexity) spans glutamate 24–serine 45. A helical membrane pass occupies residues methionine 64–isoleucine 84. The stretch at threonine 106–alanine 130 forms a coiled coil.

Its subcellular location is the membrane. This is an uncharacterized protein from Mus musculus (Mouse).